Consider the following 865-residue polypeptide: Aconitate hydratase B (865 aa).

Residues arginine 191, 244–246, 414–416, and serine 498 each bind substrate; these read SSR and QDT. Residues cysteine 710, cysteine 769, and cysteine 772 each contribute to the [4Fe-4S] cluster site. The substrate site is built by arginine 791 and arginine 796.

The protein belongs to the aconitase/IPM isomerase family. Monomer. AcnB can also form a homodimer. The monomer-homodimer transition is dependent on iron availability and the carboxymethylation of C-273 inhibits the dimer formation. [4Fe-4S] cluster serves as cofactor.

It carries out the reaction citrate = D-threo-isocitrate. The enzyme catalyses (2S,3R)-3-hydroxybutane-1,2,3-tricarboxylate = 2-methyl-cis-aconitate + H2O. Its pathway is organic acid metabolism; propanoate degradation. It participates in carbohydrate metabolism; tricarboxylic acid cycle; isocitrate from oxaloacetate: step 2/2. In terms of biological role, involved in the catabolism of short chain fatty acids (SCFA) via the tricarboxylic acid (TCA)(acetyl degradation route) and the 2-methylcitrate cycle I (propionate degradation route). Catalyzes the reversible isomerization of citrate to isocitrate via cis-aconitate. Also catalyzes the hydration of 2-methyl-cis-aconitate to yield (2R,3S)-2-methylisocitrate. The apo form of AcnB functions as a RNA-binding regulatory protein. During oxidative stress inactive AcnB apo-enzyme without iron sulfur clusters binds the acnB mRNA 3' UTRs (untranslated regions), stabilizes acnB mRNA and increases AcnB synthesis, thus mediating a post-transcriptional positive autoregulatory switch. AcnB also decreases the stability of the sodA transcript. The polypeptide is Aconitate hydratase B (Escherichia coli (strain K12)).